We begin with the raw amino-acid sequence, 211 residues long: Small ribosomal subunit protein uS3 (211 aa).

Positions Leu38–Arg106 constitute a KH type-2 domain.

This sequence belongs to the universal ribosomal protein uS3 family. Part of the 30S ribosomal subunit. Forms a tight complex with proteins S10 and S14.

In terms of biological role, binds the lower part of the 30S subunit head. Binds mRNA in the 70S ribosome, positioning it for translation. In Geobacter sulfurreducens (strain ATCC 51573 / DSM 12127 / PCA), this protein is Small ribosomal subunit protein uS3.